The sequence spans 590 residues: Aspartate--tRNA(Asp/Asn) ligase (590 aa).

Glu-172 lines the L-aspartate pocket. Positions 196–199 (QLFK) are aspartate. Residue Arg-218 coordinates L-aspartate. ATP contacts are provided by residues 218-220 (RDE) and Gln-227. His-449 contributes to the L-aspartate binding site. Glu-484 serves as a coordination point for ATP. Arg-491 contributes to the L-aspartate binding site. 536-539 (GVDR) is an ATP binding site.

Belongs to the class-II aminoacyl-tRNA synthetase family. Type 1 subfamily. Homodimer.

It localises to the cytoplasm. The catalysed reaction is tRNA(Asx) + L-aspartate + ATP = L-aspartyl-tRNA(Asx) + AMP + diphosphate. Functionally, aspartyl-tRNA synthetase with relaxed tRNA specificity since it is able to aspartylate not only its cognate tRNA(Asp) but also tRNA(Asn). Reaction proceeds in two steps: L-aspartate is first activated by ATP to form Asp-AMP and then transferred to the acceptor end of tRNA(Asp/Asn). The chain is Aspartate--tRNA(Asp/Asn) ligase from Francisella tularensis subsp. holarctica (strain FTNF002-00 / FTA).